A 351-amino-acid chain; its full sequence is Thiamine-phosphate synthase (351 aa).

The tract at residues 1-128 is unknown; sequence MKNPNIIQPE…SKIASEIRYE (128 aa). A thiamine-phosphate synthase region spans residues 129-351; it reads IYTLEIEILN…IIIKELSHEN (223 aa). 4-amino-2-methyl-5-(diphosphooxymethyl)pyrimidine-binding positions include 180–184 and N212; that span reads QHRFK. Positions 213 and 232 each coordinate Mg(2+). S251 is a binding site for 4-amino-2-methyl-5-(diphosphooxymethyl)pyrimidine. A 2-[(2R,5Z)-2-carboxy-4-methylthiazol-5(2H)-ylidene]ethyl phosphate-binding site is contributed by 277 to 279; sequence TLT. K280 provides a ligand contact to 4-amino-2-methyl-5-(diphosphooxymethyl)pyrimidine. Residues G307 and 327-328 each bind 2-[(2R,5Z)-2-carboxy-4-methylthiazol-5(2H)-ylidene]ethyl phosphate; that span reads VS.

Belongs to the thiamine-phosphate synthase family.

It catalyses the reaction 2-[(2R,5Z)-2-carboxy-4-methylthiazol-5(2H)-ylidene]ethyl phosphate + 4-amino-2-methyl-5-(diphosphooxymethyl)pyrimidine + 2 H(+) = thiamine phosphate + CO2 + diphosphate. The catalysed reaction is 2-(2-carboxy-4-methylthiazol-5-yl)ethyl phosphate + 4-amino-2-methyl-5-(diphosphooxymethyl)pyrimidine + 2 H(+) = thiamine phosphate + CO2 + diphosphate. The enzyme catalyses 4-methyl-5-(2-phosphooxyethyl)-thiazole + 4-amino-2-methyl-5-(diphosphooxymethyl)pyrimidine + H(+) = thiamine phosphate + diphosphate. It participates in cofactor biosynthesis; thiamine diphosphate biosynthesis; thiamine phosphate from 4-amino-2-methyl-5-diphosphomethylpyrimidine and 4-methyl-5-(2-phosphoethyl)-thiazole: step 1/1. Its function is as follows. Condenses 4-methyl-5-(beta-hydroxyethyl)thiazole monophosphate (THZ-P) and 2-methyl-4-amino-5-hydroxymethyl pyrimidine pyrophosphate (HMP-PP) to form thiamine monophosphate (TMP). In Prochlorococcus marinus subsp. pastoris (strain CCMP1986 / NIES-2087 / MED4), this protein is Thiamine-phosphate synthase.